A 435-amino-acid polypeptide reads, in one-letter code: Gamma-glutamyl phosphate reductase (435 aa).

The protein belongs to the gamma-glutamyl phosphate reductase family.

It is found in the cytoplasm. It carries out the reaction L-glutamate 5-semialdehyde + phosphate + NADP(+) = L-glutamyl 5-phosphate + NADPH + H(+). The protein operates within amino-acid biosynthesis; L-proline biosynthesis; L-glutamate 5-semialdehyde from L-glutamate: step 2/2. Its function is as follows. Catalyzes the NADPH-dependent reduction of L-glutamate 5-phosphate into L-glutamate 5-semialdehyde and phosphate. The product spontaneously undergoes cyclization to form 1-pyrroline-5-carboxylate. The polypeptide is Gamma-glutamyl phosphate reductase (Synechococcus sp. (strain WH7803)).